The primary structure comprises 67 residues: (2R)-sulfolactate sulfo-lyase subunit alpha (67 aa).

As to quaternary structure, (2R)-sulfolactate sulfo-lyase is composed of a SuyA and a SuyB subunit.

It localises to the cytoplasm. It carries out the reaction (2R)-3-sulfolactate = sulfite + pyruvate + H(+). Its function is as follows. Together with SuyB, desulfonates sulfolactate to pyruvate and sulfite. The chain is (2R)-sulfolactate sulfo-lyase subunit alpha (suyA) from Paracoccus pantotrophus (Thiosphaera pantotropha).